The following is a 370-amino-acid chain: Neutral protease 2 homolog AFUB_070680 (370 aa).

The N-terminal stretch at 1–19 (MKVTILASAILALINGALA) is a signal peptide. The propeptide occupies 20–172 (LPANTPTLDV…PQAIKLLDRR (153 aa)). Cystine bridges form between C178–C250 and C257–C275. Zn(2+) is bound at residue H300. E301 is an active-site residue. Zn(2+) is bound by residues H304 and D315.

It belongs to the peptidase M35 family. It depends on Zn(2+) as a cofactor.

It localises to the secreted. The catalysed reaction is Preferential cleavage of bonds with hydrophobic residues in P1'. Also 3-Asn-|-Gln-4 and 8-Gly-|-Ser-9 bonds in insulin B chain.. Secreted metalloproteinase that allows assimilation of proteinaceous substrates. Shows high activities on basic nuclear substrates such as histone and protamine. May be involved in virulence. The sequence is that of Neutral protease 2 homolog AFUB_070680 from Aspergillus fumigatus (strain CBS 144.89 / FGSC A1163 / CEA10) (Neosartorya fumigata).